A 225-amino-acid polypeptide reads, in one-letter code: Chromosome partition protein MukE (225 aa).

Residues 197-225 (RDGEAMPIENHLQLNDETEENQPDSGEEE) form a disordered region. The segment covering 212 to 225 (DETEENQPDSGEEE) has biased composition (acidic residues).

Belongs to the MukE family. As to quaternary structure, interacts, and probably forms a ternary complex, with MukF and MukB. The complex formation is stimulated by calcium or magnesium.

The protein resides in the cytoplasm. Its subcellular location is the nucleoid. Its function is as follows. Involved in chromosome condensation, segregation and cell cycle progression. May participate in facilitating chromosome segregation by condensation DNA from both sides of a centrally located replisome during cell division. Probably acts via its interaction with MukB and MukF. This chain is Chromosome partition protein MukE, found in Escherichia coli O157:H7.